Reading from the N-terminus, the 315-residue chain is GTP cyclohydrolase MptA (315 aa).

The protein belongs to the GTP cyclohydrolase IV family. In terms of assembly, homodimer. Requires Fe(2+) as cofactor.

The enzyme catalyses GTP + H2O = 7,8-dihydroneopterin 2',3'-cyclic phosphate + formate + diphosphate + H(+). The protein operates within cofactor biosynthesis; 5,6,7,8-tetrahydromethanopterin biosynthesis. Its function is as follows. Converts GTP to 7,8-dihydro-D-neopterin 2',3'-cyclic phosphate, the first intermediate in the biosynthesis of coenzyme methanopterin. This Methanococcus maripaludis (strain C6 / ATCC BAA-1332) protein is GTP cyclohydrolase MptA.